A 542-amino-acid polypeptide reads, in one-letter code: Excitatory amino acid transporter 1 (542 aa).

Residues 1–47 (MTKSNGEEARLGGRMERFQQGVRKRTLLAKKKVQNITKEDVKSYLFR) lie on the Cytoplasmic side of the membrane. Residues 48 to 68 (NAFVLLTVTAVIVGTILGFTL) traverse the membrane as a helical segment. At 69 to 86 (RPYRMSYREVKYFSFPGE) the chain is on the extracellular side. Residues 87 to 108 (LLMRMLQMLVLPLIISSLVTGM) traverse the membrane as a helical segment. Over 109–122 (AALDSKASGKMGMR) the chain is Cytoplasmic. A helical transmembrane segment spans residues 123-145 (AVVYYMTTTIIAVVIGIIIVIII). Residues 146–236 (HPGKGTKENM…ITEELVPVPG (91 aa)) lie on the Extracellular side of the membrane. The chain crosses the membrane as a helical span at residues 237–260 (SVNGVNALGLVVFSMCFGFVIGNM). The Cytoplasmic segment spans residues 261–269 (KEQGQALRE). The chain crosses the membrane as a helical span at residues 270 to 297 (FFDSLNEAIMRLVAVIMWYAPLGILFLI). The Extracellular segment spans residues 298–318 (AGKIVEMEDMGVIGGQLAMYT). Residues 319 to 340 (VTVIVGLLIHAVIVLPLLYFLV) traverse the membrane as a helical segment. Topologically, residues 341 to 345 (TRKNP) are cytoplasmic. Positions 346–376 (WVFIGGLLQALITALGTSSSSATLPITFKCL) form an intramembrane region, discontinuously helical. Position 363 to 365 (363 to 365 (SSS)) interacts with L-aspartate. Residues 377–385 (EENNGVDKR) lie on the Cytoplasmic side of the membrane. The chain crosses the membrane as a helical span at residues 386-412 (VTRFVLPVGATINMDGTALYEALAAIF). Na(+) contacts are provided by Gly-394, Thr-396, and Asn-398. L-aspartate is bound at residue Thr-402. Residues 413–425 (IAQVNNFELNFGQ) are Extracellular-facing. The segment at residues 426-459 (IITISITATAASIGAAGIPQAGLVTMVIVLTSVG) is an intramembrane region (discontinuously helical). 443–447 (IPQAG) contributes to the L-aspartate binding site. The Extracellular segment spans residues 460–472 (LPTDDITLIIAVD). The chain crosses the membrane as a helical span at residues 473–494 (WFLDRLRTTTNVLGDSLGAGIV). Residues Asp-476 and Asn-483 each contribute to the L-aspartate site. Positions 483 and 487 each coordinate Na(+). The Cytoplasmic portion of the chain corresponds to 495–542 (EHLSRHELKNRDVEMGNSVIEENEMKKPYQLISQESEIEKSMDSETKM). Ser-512 carries the post-translational modification Phosphoserine.

Belongs to the dicarboxylate/amino acid:cation symporter (DAACS) (TC 2.A.23) family. SLC1A3 subfamily. As to quaternary structure, homotrimer. Glycosylated.

The protein resides in the cell membrane. It catalyses the reaction K(+)(in) + L-glutamate(out) + 3 Na(+)(out) + H(+)(out) = K(+)(out) + L-glutamate(in) + 3 Na(+)(in) + H(+)(in). The enzyme catalyses K(+)(in) + L-aspartate(out) + 3 Na(+)(out) + H(+)(out) = K(+)(out) + L-aspartate(in) + 3 Na(+)(in) + H(+)(in). The catalysed reaction is D-aspartate(out) + K(+)(in) + 3 Na(+)(out) + H(+)(out) = D-aspartate(in) + K(+)(out) + 3 Na(+)(in) + H(+)(in). Sodium-dependent, high-affinity amino acid transporter that mediates the uptake of L-glutamate and also L-aspartate and D-aspartate. Functions as a symporter that transports one amino acid molecule together with two or three Na(+) ions and one proton, in parallel with the counter-transport of one K(+) ion. Plays a redundant role in the rapid removal of released glutamate from the synaptic cleft, which is essential for terminating the postsynaptic action of glutamate. The sequence is that of Excitatory amino acid transporter 1 (SLC1A3) from Bos taurus (Bovine).